The sequence spans 204 residues: MIGKLKGTIDEIGEDYVLVDVHGVCYVAHCSARTLSKLGSTGEACVLFIETYVREDQLKLFGFMTALEREWFNLLQSVQGVGAKVALAVLSTLPPGELANAIALQDRTAVSRAPGVGPKVAMRLVTELKNRAPAFAGEAINIGLKQELGEGVAAAPVADAVSALTNLGYSRDQAANAIAAAMKTAGEGADSAKLIRLGLKELAR.

A domain I region spans residues 1 to 64 (MIGKLKGTID…EDQLKLFGFM (64 aa)). The domain II stretch occupies residues 65-143 (TALEREWFNL…AFAGEAINIG (79 aa)). The interval 144 to 151 (LKQELGEG) is flexible linker. Residues 152–204 (VAAAPVADAVSALTNLGYSRDQAANAIAAAMKTAGEGADSAKLIRLGLKELAR) form a domain III region.

The protein belongs to the RuvA family. As to quaternary structure, homotetramer. Forms an RuvA(8)-RuvB(12)-Holliday junction (HJ) complex. HJ DNA is sandwiched between 2 RuvA tetramers; dsDNA enters through RuvA and exits via RuvB. An RuvB hexamer assembles on each DNA strand where it exits the tetramer. Each RuvB hexamer is contacted by two RuvA subunits (via domain III) on 2 adjacent RuvB subunits; this complex drives branch migration. In the full resolvosome a probable DNA-RuvA(4)-RuvB(12)-RuvC(2) complex forms which resolves the HJ.

The protein resides in the cytoplasm. Functionally, the RuvA-RuvB-RuvC complex processes Holliday junction (HJ) DNA during genetic recombination and DNA repair, while the RuvA-RuvB complex plays an important role in the rescue of blocked DNA replication forks via replication fork reversal (RFR). RuvA specifically binds to HJ cruciform DNA, conferring on it an open structure. The RuvB hexamer acts as an ATP-dependent pump, pulling dsDNA into and through the RuvAB complex. HJ branch migration allows RuvC to scan DNA until it finds its consensus sequence, where it cleaves and resolves the cruciform DNA. In Rhizobium johnstonii (strain DSM 114642 / LMG 32736 / 3841) (Rhizobium leguminosarum bv. viciae), this protein is Holliday junction branch migration complex subunit RuvA.